Here is a 149-residue protein sequence, read N- to C-terminus: MFNKILVVCVGNVCRSPTAERLLKRFHPSLTVASAGLGALVGKGADPAAASVASAHDLSLENHCARQISARLCREYDLILTMEKRHIAALCDIAPEMRGKVMLFGHWDSEREIPDPYRKSRDAFEAVYTLLERSARQWAQALNAEQGKP.

Cys-9 functions as the Nucleophile in the catalytic mechanism. Arg-15 is a catalytic residue. Catalysis depends on Asp-115, which acts as the Proton donor.

It belongs to the low molecular weight phosphotyrosine protein phosphatase family.

The catalysed reaction is O-phospho-L-tyrosyl-[protein] + H2O = L-tyrosyl-[protein] + phosphate. The protein operates within glycan metabolism; exopolysaccharide biosynthesis. Its function is as follows. Dephosphorylates Wzc. Required for the extracellular polysaccharide colanic acid synthesis. Probably involved in the export of colanic acid from the cell to medium. Involved in protection of cells against contact-dependent growth inhibition (CDI). In Salmonella typhimurium (strain LT2 / SGSC1412 / ATCC 700720), this protein is Low molecular weight protein-tyrosine-phosphatase Wzb (wzb).